The following is a 523-amino-acid chain: Uridylate cyclase (523 aa).

2 Guanylate cyclase domains span residues 69–209 and 318–438; these read VHVY…AKLA and MSIF…IGIR. Residues tyrosine 72 and arginine 125 each contribute to the a ribonucleoside 5'-triphosphate site. Residues aspartate 323, isoleucine 324, and aspartate 372 each coordinate Mn(2+).

Belongs to the adenylyl cyclase class-4/guanylyl cyclase family. Pyrimidine cyclase subfamily. In terms of assembly, monomer. The cofactor is Mn(2+).

The protein resides in the cytoplasm. It carries out the reaction UTP = 3',5'-cyclic UMP + diphosphate. Pycsar (pyrimidine cyclase system for antiphage resistance) provides immunity against bacteriophage. The pyrimidine cyclase (PycC) synthesizes cyclic nucleotides in response to infection; these serve as specific second messenger signals. The signals activate the nearby effector, leading to bacterial cell death and abortive phage infection. A clade A Pycsar system. Its function is as follows. The pyrimidine cyclase gene of a two-gene Pycsar system, generates cyclic UMP (cUMP) from UTP, has little to no activity on ATP, CTP or GTP. Expression of this and effector RsPycTM (AC A0A4R2UGS4) probably confers resistance to some bacteriophage. The genes are probably only expressed in response to bacteriophage infection. This chain is Uridylate cyclase, found in Rhizobium sp. (strain PP-F2F-G36).